The primary structure comprises 123 residues: Small ribosomal subunit protein uS12 (123 aa).

A 3-methylthioaspartic acid modification is found at Asp-89.

The protein belongs to the universal ribosomal protein uS12 family. Part of the 30S ribosomal subunit. Contacts proteins S8 and S17. May interact with IF1 in the 30S initiation complex.

Its function is as follows. With S4 and S5 plays an important role in translational accuracy. Interacts with and stabilizes bases of the 16S rRNA that are involved in tRNA selection in the A site and with the mRNA backbone. Located at the interface of the 30S and 50S subunits, it traverses the body of the 30S subunit contacting proteins on the other side and probably holding the rRNA structure together. The combined cluster of proteins S8, S12 and S17 appears to hold together the shoulder and platform of the 30S subunit. This Bifidobacterium animalis subsp. lactis (strain AD011) protein is Small ribosomal subunit protein uS12.